Here is a 272-residue protein sequence, read N- to C-terminus: Prohibitin 1 (272 aa).

Ala2 is subject to N-acetylalanine. Thr91 carries the post-translational modification Phosphothreonine. An N6-acetyllysine mark is found at Lys128 and Lys186. Residues Lys177 to Ile211 adopt a coiled-coil conformation. At Lys202 the chain carries N6-acetyllysine; alternate. Residue Lys202 is modified to N6-succinyllysine; alternate. Tyr249 carries the phosphotyrosine modification.

The protein belongs to the prohibitin family. The mitochondrial prohibitin complex consists of two subunits (PHB1 and PHB2), assembled into a membrane-associated ring-shaped supercomplex of approximately 1 mDa. Interacts with STOML2. Interacts with MAP1LC3B (membrane-bound form LC3-II); the interaction requires PHB2 and takes place upon Parkin-mediated mitochondrial damage. Interacts with STAT3 (unphosphorylated or phosphorylated at 'Ser-727'). Interacts with CLPB. Interacts with CD86 (via cytoplasmic domain); the interactions increases after priming with CD40.

The protein localises to the mitochondrion inner membrane. It localises to the nucleus. It is found in the cytoplasm. The protein resides in the cell membrane. In terms of biological role, protein with pleiotropic attributes mediated in a cell-compartment- and tissue-specific manner, which include the plasma membrane-associated cell signaling functions, mitochondrial chaperone, and transcriptional co-regulator of transcription factors in the nucleus. Plays a role in adipose tissue and glucose homeostasis in a sex-specific manner. Contributes to pulmonary vascular remodeling by accelerating proliferation of pulmonary arterial smooth muscle cells. Its function is as follows. In the mitochondria, together with PHB2, forms large ring complexes (prohibitin complexes) in the inner mitochondrial membrane (IMM) and functions as a chaperone protein that stabilizes mitochondrial respiratory enzymes and maintains mitochondrial integrity in the IMM, which is required for mitochondrial morphogenesis, neuronal survival, and normal lifespan. The prohibitin complex, with DNAJC19, regulates cardiolipin remodeling and the protein turnover of OMA1 in a cardiolipin-binding manner. Regulates mitochondrial respiration activity playing a role in cellular aging. The prohibitin complex plays a role of mitophagy receptor involved in targeting mitochondria for autophagic degradation. Involved in mitochondrial-mediated antiviral innate immunity, activates RIG-I-mediated signal transduction and production of IFNB1 and proinflammatory cytokine IL6. In the nucleus, acts as a transcription coregulator, enhances promoter binding by TP53, a transcription factor it activates, but reduces the promoter binding by E2F1, a transcription factor it represses. Interacts with STAT3 to affect IL17 secretion in T-helper Th17 cells. Functionally, in the plasma membrane, cooperates with CD86 to mediate CD86-signaling in B lymphocytes that regulates the level of IgG1 produced through the activation of distal signaling intermediates. Upon CD40 engagement, required to activate NF-kappa-B signaling pathway via phospholipase C and protein kinase C activation. The protein is Prohibitin 1 (PHB1) of Bos taurus (Bovine).